A 433-amino-acid chain; its full sequence is Enolase (433 aa).

Residue Gln-163 coordinates (2R)-2-phosphoglycerate. The active-site Proton donor is the Glu-205. Mg(2+) is bound by residues Asp-242, Glu-286, and Asp-313. (2R)-2-phosphoglycerate-binding residues include Lys-338, Arg-367, Ser-368, and Lys-389. Catalysis depends on Lys-338, which acts as the Proton acceptor.

This sequence belongs to the enolase family. It depends on Mg(2+) as a cofactor.

The protein localises to the cytoplasm. It localises to the secreted. Its subcellular location is the cell surface. It catalyses the reaction (2R)-2-phosphoglycerate = phosphoenolpyruvate + H2O. It functions in the pathway carbohydrate degradation; glycolysis; pyruvate from D-glyceraldehyde 3-phosphate: step 4/5. Functionally, catalyzes the reversible conversion of 2-phosphoglycerate (2-PG) into phosphoenolpyruvate (PEP). It is essential for the degradation of carbohydrates via glycolysis. This chain is Enolase, found in Koribacter versatilis (strain Ellin345).